A 561-amino-acid chain; its full sequence is Zinc finger protein with KRAB and SCAN domains 1 (561 aa).

The interval 1–51 (MMTAESRETTGLSPQAAQEKDGIVIVKVEEEDEEDHMWGQDSSLQETPPPD) is disordered. Residue serine 13 is modified to Phosphoserine. Residue lysine 27 forms a Glycyl lysine isopeptide (Lys-Gly) (interchain with G-Cter in SUMO2) linkage. Residues 56–138 (RQRFRRFCYQ…TLLEDLELDL (83 aa)) form the SCAN box domain. The interval 163 to 187 (VQESSSFDHHETAQSHFKHSSRKPR) is disordered. The segment covering 178–187 (HFKHSSRKPR) has biased composition (basic residues). Residues lysine 180 and lysine 226 each participate in a glycyl lysine isopeptide (Lys-Gly) (interchain with G-Cter in SUMO2) cross-link. The region spanning 225–304 (VKIEDMAVSL…QKEFGEKREQ (80 aa)) is the KRAB domain. A compositionally biased stretch (polar residues) spans 260-275 (NVFSQGSENRNGNEST). Residues 260–372 (NVFSQGSENR…NTPEEAPSGA (113 aa)) are disordered. Composition is skewed to basic and acidic residues over residues 276 to 286 (SKAEVKEDSTS) and 294 to 349 (FQKE…EKGK). Glycyl lysine isopeptide (Lys-Gly) (interchain with G-Cter in SUMO2) cross-links involve residues lysine 277, lysine 296, lysine 301, and lysine 336. Residues 355–365 (FSLSANFNNTP) are compositionally biased toward polar residues. Lysine 373 participates in a covalent cross-link: Glycyl lysine isopeptide (Lys-Gly) (interchain with G-Cter in SUMO2). 6 C2H2-type zinc fingers span residues 375–397 (HRCDECGKCFTRSSSLIRHKIIH), 403–425 (YECNECGKAFSLNSNLVLHQRIH), 431–453 (HECNECGKAFSHSSNLILHQRIH), 459–481 (YECNECGKAFSQSSDLTKHQRIH), 487–509 (YECSECGKAFNRNSYLILHRRIH), and 515–537 (YKCTKCGKAFTRSSTLTLHHRIH). Glycyl lysine isopeptide (Lys-Gly) (interchain with G-Cter in SUMO2) cross-links involve residues lysine 410, lysine 438, and lysine 476. Lysine 558 participates in a covalent cross-link: Glycyl lysine isopeptide (Lys-Gly) (interchain with G-Cter in SUMO2).

The protein belongs to the krueppel C2H2-type zinc-finger protein family.

Its subcellular location is the nucleus. Its function is as follows. May be involved in transcriptional regulation. The chain is Zinc finger protein with KRAB and SCAN domains 1 (Zkscan1) from Mus musculus (Mouse).